A 445-amino-acid chain; its full sequence is Eukaryotic translation initiation factor 3 subunit E (445 aa).

Residues 230–403 form the PCI domain; sequence FFNHVKGRDL…GHVVMGAQPL (174 aa).

The protein belongs to the eIF-3 subunit E family. In terms of assembly, component of the eukaryotic translation initiation factor 3 (eIF-3) complex.

It is found in the cytoplasm. Its function is as follows. Component of the eukaryotic translation initiation factor 3 (eIF-3) complex, which is involved in protein synthesis of a specialized repertoire of mRNAs and, together with other initiation factors, stimulates binding of mRNA and methionyl-tRNAi to the 40S ribosome. The eIF-3 complex specifically targets and initiates translation of a subset of mRNAs involved in cell proliferation. In Bombyx mori (Silk moth), this protein is Eukaryotic translation initiation factor 3 subunit E (eIF3-S6).